Reading from the N-terminus, the 905-residue chain is Transcriptional regulator MNL1 (905 aa).

The span at 1–29 (MDSHNNIDQSVSELLSDPASVQQSYNSQL) shows a compositional bias: polar residues. 8 disordered regions span residues 1 to 34 (MDSHNNIDQSVSELLSDPASVQQSYNSQLRGPEF), 312 to 340 (QTQAQAQAHQQQQQQSQQQHSPQDLASHT), 383 to 419 (MDQVPSSLHRPSFDLYNHRPSIDSQHSQQSQQRNARY), 434 to 460 (SEKNTNHNNRSPPTPPTSTSSPQNLLS), 525 to 544 (TKEEPEDELMQPKKVKKPKR), 584 to 613 (NISSHHSSGTPSITTGAGGNTLEHSISESS), 625 to 671 (NVGK…GTVE), and 685 to 733 (PASE…TSST). The segment covering 312-334 (QTQAQAQAHQQQQQQSQQQHSPQ) has biased composition (low complexity). A compositionally biased stretch (low complexity) spans 439–460 (NHNNRSPPTPPTSTSSPQNLLS). Positions 584-598 (NISSHHSSGTPSITT) are enriched in polar residues. A compositionally biased stretch (basic residues) spans 628 to 639 (KRKNKSYRKPKG). Low complexity-rich tracts occupy residues 647–669 (QQQQLPLSSGTAGGTSSNNSTGT) and 690–710 (SSLLDNASAGNASASSSEASS). 2 C2H2-type zinc fingers span residues 832–855 (YLCNLCQRRFKRHEHLKRHFRSLH) and 861–883 (YNCDICHKKFSRSDNLNQHLKIH). The tract at residues 885–905 (QEDEKDCADAETGVGMDDASG) is disordered.

Its subcellular location is the nucleus. Transcription factor that activates stress response genes via SLE (STRE-like) elements. Required for adaptation to weak acid stress such as acetic acid stress, but seems not involved in the response to heat, osmotic, ethanol, nutrient, oxidative, or heavy-metal stress. Activates a subset of the genes that are repressed by NRG1. The polypeptide is Transcriptional regulator MNL1 (MNL1) (Candida albicans (strain SC5314 / ATCC MYA-2876) (Yeast)).